The following is a 258-amino-acid chain: Thiazole synthase (258 aa).

Lys-98 acts as the Schiff-base intermediate with DXP in catalysis. Residues Gly-159, 185–186 (AG), and 207–208 (NT) each bind 1-deoxy-D-xylulose 5-phosphate.

The protein belongs to the ThiG family. In terms of assembly, homotetramer. Forms heterodimers with either ThiH or ThiS.

Its subcellular location is the cytoplasm. It catalyses the reaction [ThiS sulfur-carrier protein]-C-terminal-Gly-aminoethanethioate + 2-iminoacetate + 1-deoxy-D-xylulose 5-phosphate = [ThiS sulfur-carrier protein]-C-terminal Gly-Gly + 2-[(2R,5Z)-2-carboxy-4-methylthiazol-5(2H)-ylidene]ethyl phosphate + 2 H2O + H(+). Its pathway is cofactor biosynthesis; thiamine diphosphate biosynthesis. Its function is as follows. Catalyzes the rearrangement of 1-deoxy-D-xylulose 5-phosphate (DXP) to produce the thiazole phosphate moiety of thiamine. Sulfur is provided by the thiocarboxylate moiety of the carrier protein ThiS. In vitro, sulfur can be provided by H(2)S. The sequence is that of Thiazole synthase from Bacillus thuringiensis subsp. konkukian (strain 97-27).